A 145-amino-acid polypeptide reads, in one-letter code: U20-hexatoxin-Hi1a (145 aa).

The signal sequence occupies residues 1-16; sequence MYQFLIIVILAAFVNG. 2 consecutive Thyroglobulin type-1 domains span residues 20–73 and 82–145; these read KTEC…GQPM and ACEC…RLEC. Disulfide bonds link C23/C45, C56/C63, C85/C106, C117/C124, and C126/C145.

As to expression, expressed by the venom gland.

It localises to the secreted. Functionally, cysteine proteinase inhibitor. The chain is U20-hexatoxin-Hi1a from Hadronyche infensa (Fraser island funnel-web spider).